The primary structure comprises 524 residues: uncharacterized protein (524 aa).

Residues 13-33 form a helical membrane-spanning segment; that stretch reads EFILLILGMTVVGIVITMGLV.

The protein resides in the membrane. This is an uncharacterized protein from Methanocaldococcus jannaschii (strain ATCC 43067 / DSM 2661 / JAL-1 / JCM 10045 / NBRC 100440) (Methanococcus jannaschii).